A 500-amino-acid chain; its full sequence is Probable cytosol aminopeptidase (500 aa).

Positions 265 and 270 each coordinate Mn(2+). Residue Lys-277 is part of the active site. Asp-288, Asp-347, and Glu-349 together coordinate Mn(2+). Arg-351 is an active-site residue.

The protein belongs to the peptidase M17 family. Mn(2+) serves as cofactor.

It is found in the cytoplasm. It carries out the reaction Release of an N-terminal amino acid, Xaa-|-Yaa-, in which Xaa is preferably Leu, but may be other amino acids including Pro although not Arg or Lys, and Yaa may be Pro. Amino acid amides and methyl esters are also readily hydrolyzed, but rates on arylamides are exceedingly low.. The catalysed reaction is Release of an N-terminal amino acid, preferentially leucine, but not glutamic or aspartic acids.. Presumably involved in the processing and regular turnover of intracellular proteins. Catalyzes the removal of unsubstituted N-terminal amino acids from various peptides. The polypeptide is Probable cytosol aminopeptidase (Rickettsia peacockii (strain Rustic)).